The primary structure comprises 109 residues: Large ribosomal subunit protein uL22 (109 aa).

Belongs to the universal ribosomal protein uL22 family. In terms of assembly, part of the 50S ribosomal subunit.

Its function is as follows. This protein binds specifically to 23S rRNA; its binding is stimulated by other ribosomal proteins, e.g. L4, L17, and L20. It is important during the early stages of 50S assembly. It makes multiple contacts with different domains of the 23S rRNA in the assembled 50S subunit and ribosome. The globular domain of the protein is located near the polypeptide exit tunnel on the outside of the subunit, while an extended beta-hairpin is found that lines the wall of the exit tunnel in the center of the 70S ribosome. The sequence is that of Large ribosomal subunit protein uL22 from Bordetella avium (strain 197N).